Reading from the N-terminus, the 492-residue chain is Aspartyl/glutamyl-tRNA(Asn/Gln) amidotransferase subunit B (492 aa).

It belongs to the GatB/GatE family. GatB subfamily. Heterotrimer of A, B and C subunits.

It carries out the reaction L-glutamyl-tRNA(Gln) + L-glutamine + ATP + H2O = L-glutaminyl-tRNA(Gln) + L-glutamate + ADP + phosphate + H(+). It catalyses the reaction L-aspartyl-tRNA(Asn) + L-glutamine + ATP + H2O = L-asparaginyl-tRNA(Asn) + L-glutamate + ADP + phosphate + 2 H(+). Allows the formation of correctly charged Asn-tRNA(Asn) or Gln-tRNA(Gln) through the transamidation of misacylated Asp-tRNA(Asn) or Glu-tRNA(Gln) in organisms which lack either or both of asparaginyl-tRNA or glutaminyl-tRNA synthetases. The reaction takes place in the presence of glutamine and ATP through an activated phospho-Asp-tRNA(Asn) or phospho-Glu-tRNA(Gln). This chain is Aspartyl/glutamyl-tRNA(Asn/Gln) amidotransferase subunit B, found in Azorhizobium caulinodans (strain ATCC 43989 / DSM 5975 / JCM 20966 / LMG 6465 / NBRC 14845 / NCIMB 13405 / ORS 571).